We begin with the raw amino-acid sequence, 2524 residues long: Highly reducing polyketide synthase Preu5 (2524 aa).

One can recognise a Ketosynthase family 3 (KS3) domain in the interval 5-426 (DTPIAIIGLS…GSNSAIVIEK (422 aa)). Active-site for beta-ketoacyl synthase activity residues include Cys-175, His-310, and His-350. Residues 431–470 (DELGHETNGTNGVSVSNGVNGSNGFTNGSNGTNGHAENGN) are disordered. Positions 437–464 (TNGTNGVSVSNGVNGSNGFTNGSNGTNG) are enriched in low complexity. The tract at residues 559 to 882 (VFTGQGAQYA…TYLPSLVRNV (324 aa)) is malonyl-CoA:ACP transacylase (MAT) domain. The active-site For malonyltransferase activity is Ser-648. The N-terminal hotdog fold stretch occupies residues 950–1084 (HELLGRRVVS…GQIEPEFADM (135 aa)). The 315-residue stretch at 950-1264 (HELLGRRVVS…FRNIGSADEN (315 aa)) folds into the PKS/mFAS DH domain. The segment at 950–1266 (HELLGRRVVS…NIGSADENID (317 aa)) is dehydratase (DH) domain. His-982 serves as the catalytic Proton acceptor; for dehydratase activity. Residues 1102–1264 (ADLLEHDIEG…FRNIGSADEN (163 aa)) form a C-terminal hotdog fold region. Asp-1171 (proton donor; for dehydratase activity) is an active-site residue. Positions 1418–1611 (SQAVGDLADN…IPGVWDSEVQ (194 aa)) are methyltransferase (CMet) domain. The segment at 1825-2139 (GSPDSIYFRR…SGDHLGKIVV (315 aa)) is enoylreductase (ER) domain. The interval 2164 to 2339 (GTYLVTGGTR…HTVSIALPIV (176 aa)) is ketoreductase (KR) domain. The Carrier domain maps to 2445-2522 (DPLEGLTEAL…ALATDILSQR (78 aa)). At Ser-2482 the chain carries O-(pantetheine 4'-phosphoryl)serine.

Requires pantetheine 4'-phosphate as cofactor.

Highly reducing polyketide synthase; part of a gene cluster that mediates the biosynthesis of a yet unidentified natural product. This is Highly reducing polyketide synthase Preu5 from Preussia isomera (Coprophilous fungus).